The primary structure comprises 478 residues: GTPase Obg (478 aa).

Positions 2 to 159 (TTFVDRVELH…RDIVLELKTV (158 aa)) constitute an Obg domain. The disordered stretch occupies residues 61-87 (HHSPHRKATNGQPGAGDNRSGKDGQDL). An OBG-type G domain is found at 160 to 330 (ADVALVGYPS…LSFALAGIIA (171 aa)). Residues 166-173 (GYPSAGKS), 191-195 (FTTLV), 212-215 (DVPG), 282-285 (NKVD), and 311-313 (SAI) each bind GTP. Residues serine 173 and threonine 193 each contribute to the Mg(2+) site. In terms of domain architecture, OCT spans 348 to 430 (PRAVDDAGFT…ENAVVFDWEP (83 aa)). Residues 436–478 (AEMLGRRGEDHRLEEPRPAAQRRRERDAERDDAEKEYDEFDPF) form a disordered region. Positions 439–468 (LGRRGEDHRLEEPRPAAQRRRERDAERDDA) are enriched in basic and acidic residues. Residues 469 to 478 (EKEYDEFDPF) are compositionally biased toward acidic residues.

Belongs to the TRAFAC class OBG-HflX-like GTPase superfamily. OBG GTPase family. In terms of assembly, monomer. Mg(2+) is required as a cofactor.

It is found in the cytoplasm. In terms of biological role, an essential GTPase which binds GTP, GDP and possibly (p)ppGpp with moderate affinity, with high nucleotide exchange rates and a fairly low GTP hydrolysis rate. Plays a role in control of the cell cycle, stress response, ribosome biogenesis and in those bacteria that undergo differentiation, in morphogenesis control. The protein is GTPase Obg of Streptomyces griseus subsp. griseus (strain JCM 4626 / CBS 651.72 / NBRC 13350 / KCC S-0626 / ISP 5235).